Consider the following 454-residue polypeptide: MTTTVIILAAGKGTRMRSHLPKVLQPLAGRPLLGHVIQTAKQLNANNIITIFGHGGAQVQQQFQQENIQWVEQTEQLGTGHAVQMTLPVLPHDGLSLILYGDVPLVRQQTLEKLLAVSSTTGIGMITLRVEDPTGYGRIIRESDKIQAIVEHKDASEQQRQIQEINTGIYCVSNQKLHEWLPKLSNNNAQGEYYLTDIVAMAVADGLEIASIQPDLAFEVEGVNDRLQLAALEREFQLQQAKSLMQQGVTLTDPSRFDLRGTLKIGQDVRIDINVIIEGNCELGDFVEIGAGCVLKNTKIAAGTKVQPYSIFEDAVVGENTQIGPFARLRPGAHLAAEVHIGNFVEVKNTSIGVGSKANHFTYLGDAEVGAGSNIGAGTITCNYDGANKHKTVIGDAVFIGSNSSLVAPVSIGDGATVGAGSVITRNVPENTLAFERAQQIEKANYQRPQKLKK.

The segment at 1 to 226 (MTTTVIILAA…AFEVEGVNDR (226 aa)) is pyrophosphorylase. Residues 8–11 (LAAG), lysine 22, glutamine 73, 78–79 (GT), 100–102 (YGD), glycine 137, glutamate 151, asparagine 166, and asparagine 224 contribute to the UDP-N-acetyl-alpha-D-glucosamine site. Aspartate 102 serves as a coordination point for Mg(2+). Asparagine 224 contacts Mg(2+). The segment at 227–247 (LQLAALEREFQLQQAKSLMQQ) is linker. Residues 248 to 454 (GVTLTDPSRF…NYQRPQKLKK (207 aa)) form an N-acetyltransferase region. UDP-N-acetyl-alpha-D-glucosamine-binding residues include arginine 330 and lysine 348. Histidine 360 acts as the Proton acceptor in catalysis. The UDP-N-acetyl-alpha-D-glucosamine site is built by tyrosine 363 and asparagine 374. Acetyl-CoA contacts are provided by residues alanine 377, 383 to 384 (NY), serine 402, alanine 420, and arginine 437.

In the N-terminal section; belongs to the N-acetylglucosamine-1-phosphate uridyltransferase family. It in the C-terminal section; belongs to the transferase hexapeptide repeat family. As to quaternary structure, homotrimer. It depends on Mg(2+) as a cofactor.

The protein resides in the cytoplasm. It catalyses the reaction alpha-D-glucosamine 1-phosphate + acetyl-CoA = N-acetyl-alpha-D-glucosamine 1-phosphate + CoA + H(+). The catalysed reaction is N-acetyl-alpha-D-glucosamine 1-phosphate + UTP + H(+) = UDP-N-acetyl-alpha-D-glucosamine + diphosphate. The protein operates within nucleotide-sugar biosynthesis; UDP-N-acetyl-alpha-D-glucosamine biosynthesis; N-acetyl-alpha-D-glucosamine 1-phosphate from alpha-D-glucosamine 6-phosphate (route II): step 2/2. It participates in nucleotide-sugar biosynthesis; UDP-N-acetyl-alpha-D-glucosamine biosynthesis; UDP-N-acetyl-alpha-D-glucosamine from N-acetyl-alpha-D-glucosamine 1-phosphate: step 1/1. Its pathway is bacterial outer membrane biogenesis; LPS lipid A biosynthesis. Functionally, catalyzes the last two sequential reactions in the de novo biosynthetic pathway for UDP-N-acetylglucosamine (UDP-GlcNAc). The C-terminal domain catalyzes the transfer of acetyl group from acetyl coenzyme A to glucosamine-1-phosphate (GlcN-1-P) to produce N-acetylglucosamine-1-phosphate (GlcNAc-1-P), which is converted into UDP-GlcNAc by the transfer of uridine 5-monophosphate (from uridine 5-triphosphate), a reaction catalyzed by the N-terminal domain. The protein is Bifunctional protein GlmU of Acinetobacter baylyi (strain ATCC 33305 / BD413 / ADP1).